A 304-amino-acid polypeptide reads, in one-letter code: Aspartate carbamoyltransferase catalytic subunit (304 aa).

Residues arginine 49 and threonine 50 each coordinate carbamoyl phosphate. An L-aspartate-binding site is contributed by lysine 77. Residues arginine 99, histidine 127, and glutamine 130 each coordinate carbamoyl phosphate. 2 residues coordinate L-aspartate: arginine 160 and arginine 211. Carbamoyl phosphate contacts are provided by alanine 252 and proline 253.

It belongs to the aspartate/ornithine carbamoyltransferase superfamily. ATCase family. As to quaternary structure, heterododecamer (2C3:3R2) of six catalytic PyrB chains organized as two trimers (C3), and six regulatory PyrI chains organized as three dimers (R2).

The enzyme catalyses carbamoyl phosphate + L-aspartate = N-carbamoyl-L-aspartate + phosphate + H(+). Its pathway is pyrimidine metabolism; UMP biosynthesis via de novo pathway; (S)-dihydroorotate from bicarbonate: step 2/3. Its function is as follows. Catalyzes the condensation of carbamoyl phosphate and aspartate to form carbamoyl aspartate and inorganic phosphate, the committed step in the de novo pyrimidine nucleotide biosynthesis pathway. In Bacillus cereus (strain G9842), this protein is Aspartate carbamoyltransferase catalytic subunit.